The chain runs to 453 residues: UDP-glycosyltransferase 76E1 (453 aa).

UDP-alpha-D-glucose-binding positions include serine 272, 331–333 (APQ), 348–356 (HCGWNSTLE), and 370–373 (TGDQ).

Belongs to the UDP-glycosyltransferase family.

Its function is as follows. Possesses low quercetin 3-O-glucosyltransferase and 7-O-glucosyltransferase activities in vitro. This is UDP-glycosyltransferase 76E1 (UGT76E1) from Arabidopsis thaliana (Mouse-ear cress).